We begin with the raw amino-acid sequence, 53 residues long: UPF0391 membrane protein PA5482 (53 aa).

2 consecutive transmembrane segments (helical) span residues 4 to 24 (WAITFLIIAIIAAVLGFGGIA) and 29 to 49 (GIAKILFVLFLVLFVVSFFFG).

It belongs to the UPF0391 family.

It localises to the cell membrane. This chain is UPF0391 membrane protein PA5482, found in Pseudomonas aeruginosa (strain ATCC 15692 / DSM 22644 / CIP 104116 / JCM 14847 / LMG 12228 / 1C / PRS 101 / PAO1).